The chain runs to 291 residues: 4-diphosphocytidyl-2-C-methyl-D-erythritol kinase (291 aa).

The active site involves Lys8. 89–99 (PIGAGVGGGSS) lines the ATP pocket. The active site involves Asp131.

This sequence belongs to the GHMP kinase family. IspE subfamily.

The enzyme catalyses 4-CDP-2-C-methyl-D-erythritol + ATP = 4-CDP-2-C-methyl-D-erythritol 2-phosphate + ADP + H(+). The protein operates within isoprenoid biosynthesis; isopentenyl diphosphate biosynthesis via DXP pathway; isopentenyl diphosphate from 1-deoxy-D-xylulose 5-phosphate: step 3/6. Catalyzes the phosphorylation of the position 2 hydroxy group of 4-diphosphocytidyl-2C-methyl-D-erythritol. This is 4-diphosphocytidyl-2-C-methyl-D-erythritol kinase from Chlamydia caviae (strain ATCC VR-813 / DSM 19441 / 03DC25 / GPIC) (Chlamydophila caviae).